A 223-amino-acid chain; its full sequence is Urease accessory protein UreG (223 aa).

The disordered stretch occupies residues 1–30 (MAKHSHDHTHDHHDRPRRVRKPGEPLRIGV). 32 to 39 (GPVGSGKT) lines the GTP pocket.

It belongs to the SIMIBI class G3E GTPase family. UreG subfamily. Homodimer. UreD, UreF and UreG form a complex that acts as a GTP-hydrolysis-dependent molecular chaperone, activating the urease apoprotein by helping to assemble the nickel containing metallocenter of UreC. The UreE protein probably delivers the nickel.

It localises to the cytoplasm. Its function is as follows. Facilitates the functional incorporation of the urease nickel metallocenter. This process requires GTP hydrolysis, probably effectuated by UreG. The protein is Urease accessory protein UreG of Mycobacterium ulcerans (strain Agy99).